A 235-amino-acid polypeptide reads, in one-letter code: Orotidine 5'-phosphate decarboxylase (235 aa).

Substrate is bound by residues Asp17, Lys39, 66–75, Thr121, Arg182, Gln191, Gly211, and Arg212; that span reads DLKLHDIGNT. Lys68 acts as the Proton donor in catalysis.

The protein belongs to the OMP decarboxylase family. Type 1 subfamily. In terms of assembly, homodimer.

The catalysed reaction is orotidine 5'-phosphate + H(+) = UMP + CO2. The protein operates within pyrimidine metabolism; UMP biosynthesis via de novo pathway; UMP from orotate: step 2/2. Its function is as follows. Catalyzes the decarboxylation of orotidine 5'-monophosphate (OMP) to uridine 5'-monophosphate (UMP). The sequence is that of Orotidine 5'-phosphate decarboxylase from Rhodopseudomonas palustris (strain HaA2).